Here is a 599-residue protein sequence, read N- to C-terminus: Elongation factor 4 (599 aa).

Positions 5-187 (SHIRNFSIVA…SIVQNLPAPK (183 aa)) constitute a tr-type G domain. GTP-binding positions include 17–22 (DHGKST) and 134–137 (NKID).

It belongs to the TRAFAC class translation factor GTPase superfamily. Classic translation factor GTPase family. LepA subfamily.

It is found in the cell inner membrane. It catalyses the reaction GTP + H2O = GDP + phosphate + H(+). Functionally, required for accurate and efficient protein synthesis under certain stress conditions. May act as a fidelity factor of the translation reaction, by catalyzing a one-codon backward translocation of tRNAs on improperly translocated ribosomes. Back-translocation proceeds from a post-translocation (POST) complex to a pre-translocation (PRE) complex, thus giving elongation factor G a second chance to translocate the tRNAs correctly. Binds to ribosomes in a GTP-dependent manner. In Roseobacter denitrificans (strain ATCC 33942 / OCh 114) (Erythrobacter sp. (strain OCh 114)), this protein is Elongation factor 4.